Consider the following 1462-residue polypeptide: Trifunctional nucleotide phosphoesterase protein YfkN (1462 aa).

A signal peptide spans 1 to 35 (MRIQKRRTHVENILRILLPPIMILSLILPTPPIHA). The tract at residues 36–623 (EESAAPQVHL…GTNLTFESSL (588 aa)) is 2',3'-cyclic nucleotide 2'-phosphodiesterase/3'-nucleotidase. Aspartate 52, histidine 54, aspartate 97, asparagine 141, histidine 249, histidine 282, and histidine 284 together coordinate a divalent metal cation. A ribonucleoside 3'-phosphate-binding positions include tyrosine 458 and 561 to 567 (YRASGGG). Positions 624–1427 (LAKPFADKAD…GPAGGLLPDT (804 aa)) are 5'-nucleotidase. Residues aspartate 676, histidine 678, aspartate 708, asparagine 740, histidine 872, histidine 895, and histidine 897 each contribute to the a divalent metal cation site. A ribonucleoside 5'-phosphate-binding positions include phenylalanine 1047 and 1127-1133 (FVGAGGD). Residues 1350-1422 (ILNSGSNNKP…GSGTDGPAGG (73 aa)) form a disordered region. Residues 1405 to 1421 (GSGGNGSGGSGTDGPAG) show a composition bias toward gly residues. An LPXTG sorting signal motif is present at residues 1424 to 1428 (LPDTA). Threonine 1427 bears the Pentaglycyl murein peptidoglycan amidated threonine mark. The propeptide at 1428 to 1462 (ATSMYSILLAGFLISALGTAMYLHQRRKQNRANQA) is removed by sortase.

Belongs to the 5'-nucleotidase family. The cofactor is a divalent metal cation.

Its subcellular location is the secreted. It localises to the cell wall. The catalysed reaction is a nucleoside 2',3'-cyclic phosphate + H2O = a nucleoside 3'-phosphate + H(+). It carries out the reaction a ribonucleoside 3'-phosphate + H2O = a ribonucleoside + phosphate. The enzyme catalyses a ribonucleoside 5'-phosphate + H2O = a ribonucleoside + phosphate. Catalyzes the release of inorganic phosphate from 2',3'-cyclic nucleotides through consecutive 2',3'-phosphodiesterase and 3'- (or 2') nucleotidase activities. Also possesses a 5'-nucleotidase activity. Does not catalyze the release of inorganic phosphate from 3',5'-cyclic nucleotides. Probably plays a role in the cellular reprocessing of nucleotides present in the medium, under conditions of phosphate shortage. This Bacillus subtilis (strain 168) protein is Trifunctional nucleotide phosphoesterase protein YfkN (yfkN).